We begin with the raw amino-acid sequence, 308 residues long: Aspartate carbamoyltransferase catalytic subunit (308 aa).

Carbamoyl phosphate-binding residues include R59 and T60. K87 is a binding site for L-aspartate. Residues R109, H139, and Q142 each coordinate carbamoyl phosphate. R172 and R224 together coordinate L-aspartate. Carbamoyl phosphate-binding residues include A265 and P266.

The protein belongs to the aspartate/ornithine carbamoyltransferase superfamily. ATCase family. In terms of assembly, heterododecamer (2C3:3R2) of six catalytic PyrB chains organized as two trimers (C3), and six regulatory PyrI chains organized as three dimers (R2).

The enzyme catalyses carbamoyl phosphate + L-aspartate = N-carbamoyl-L-aspartate + phosphate + H(+). The protein operates within pyrimidine metabolism; UMP biosynthesis via de novo pathway; (S)-dihydroorotate from bicarbonate: step 2/3. Functionally, catalyzes the condensation of carbamoyl phosphate and aspartate to form carbamoyl aspartate and inorganic phosphate, the committed step in the de novo pyrimidine nucleotide biosynthesis pathway. The polypeptide is Aspartate carbamoyltransferase catalytic subunit (Streptococcus mutans serotype c (strain ATCC 700610 / UA159)).